A 327-amino-acid polypeptide reads, in one-letter code: Aspartate--ammonia ligase (327 aa).

Belongs to the class-II aminoacyl-tRNA synthetase family. AsnA subfamily.

The protein resides in the cytoplasm. The enzyme catalyses L-aspartate + NH4(+) + ATP = L-asparagine + AMP + diphosphate + H(+). The protein operates within amino-acid biosynthesis; L-asparagine biosynthesis; L-asparagine from L-aspartate (ammonia route): step 1/1. The polypeptide is Aspartate--ammonia ligase (Bacillus anthracis (strain A0248)).